The chain runs to 90 residues: MRDPVSSQYSSFLFWRMPIPELDLSELEGLGLSDTPTYESKDSSSVGKMNGQASGTEQKNPEGDPLLEYSTFNFWRAPIASIHSVDLDLL.

A Nuclear export signal motif is present at residues 24 to 32 (LSELEGLGL). The segment at 31-64 (GLSDTPTYESKDSSSVGKMNGQASGTEQKNPEGD) is disordered. A compositionally biased stretch (polar residues) spans 35–58 (TPTYESKDSSSVGKMNGQASGTEQ). Residue Ser-84 is modified to Phosphoserine.

This sequence belongs to the MLLT11 family. As to quaternary structure, interacts with HSPA8 and LAMP2 isoform A; the interaction may target MLLT11 for degradation via chaperone-mediated autophagy. Interacts with TCF7. Ubiquitinated, leading to degradation. In terms of tissue distribution, detected in embryonic brain cortex.

It localises to the nucleus. Its subcellular location is the cytoplasm. The protein resides in the cytoskeleton. It is found in the microtubule organizing center. The protein localises to the centrosome. In terms of biological role, cofactor for the transcription factor TCF7. Involved in regulation of lymphoid development by driving multipotent hematopoietic progenitor cells towards a T-cell fate. The protein is Protein AF1q (Mllt11) of Mus musculus (Mouse).